Here is a 366-residue protein sequence, read N- to C-terminus: Probable glucuronokinase 2 (366 aa).

126–136 (PRQTGLSGSSA) provides a ligand contact to ATP. Residue Asp-179 is the Proton acceptor of the active site.

It belongs to the GHMP kinase family. The cofactor is Mg(2+). Requires Mn(2+) as cofactor. It depends on Co(2+) as a cofactor.

It catalyses the reaction D-glucuronate + ATP = 1-phospho-alpha-D-glucuronate + ADP + H(+). Its function is as follows. Sugar-1-kinase with a strict substrate specificity for D-glucuronic acid and ATP. Involved in the biosynthesis of UDP-glucuronic acid (UDP-GlcA), providing nucleotide sugars for cell-wall polymers. May be also involved in a salvage pathway for glucuronic acid. The chain is Probable glucuronokinase 2 (GLCAK2) from Arabidopsis thaliana (Mouse-ear cress).